The chain runs to 264 residues: Thymidylate synthase (264 aa).

Residues arginine 21 and 126–127 (RR) contribute to the dUMP site. Cysteine 146 functions as the Nucleophile in the catalytic mechanism. DUMP is bound by residues 166–169 (RSAD), asparagine 177, and 207–209 (HLY). Residue aspartate 169 participates in (6R)-5,10-methylene-5,6,7,8-tetrahydrofolate binding. Alanine 263 lines the (6R)-5,10-methylene-5,6,7,8-tetrahydrofolate pocket.

Belongs to the thymidylate synthase family. Bacterial-type ThyA subfamily. Homodimer.

The protein localises to the cytoplasm. It carries out the reaction dUMP + (6R)-5,10-methylene-5,6,7,8-tetrahydrofolate = 7,8-dihydrofolate + dTMP. It participates in pyrimidine metabolism; dTTP biosynthesis. Functionally, catalyzes the reductive methylation of 2'-deoxyuridine-5'-monophosphate (dUMP) to 2'-deoxythymidine-5'-monophosphate (dTMP) while utilizing 5,10-methylenetetrahydrofolate (mTHF) as the methyl donor and reductant in the reaction, yielding dihydrofolate (DHF) as a by-product. This enzymatic reaction provides an intracellular de novo source of dTMP, an essential precursor for DNA biosynthesis. This chain is Thymidylate synthase, found in Bradyrhizobium sp. (strain BTAi1 / ATCC BAA-1182).